Consider the following 134-residue polypeptide: Profilin-2 (134 aa).

C13 and C118 form a disulfide bridge. Positions 84 to 100 (AVIRGKKGSGGITIKKT) match the Involved in PIP2 interaction motif. The residue at position 114 (T114) is a Phosphothreonine.

This sequence belongs to the profilin family. As to quaternary structure, occurs in many kinds of cells as a complex with monomeric actin in a 1:1 ratio. Phosphorylated by MAP kinases.

It localises to the cytoplasm. The protein resides in the cytoskeleton. Its function is as follows. Binds to actin and affects the structure of the cytoskeleton. At high concentrations, profilin prevents the polymerization of actin, whereas it enhances it at low concentrations. The chain is Profilin-2 from Olea europaea (Common olive).